The primary structure comprises 347 residues: Biotin synthase (347 aa).

One can recognise a Radical SAM core domain in the interval 40-258 (AQVQVSTLLS…IAVARIVMPR (219 aa)). Residues C55, C59, and C62 each coordinate [4Fe-4S] cluster. Positions 99, 130, 190, and 262 each coordinate [2Fe-2S] cluster.

This sequence belongs to the radical SAM superfamily. Biotin synthase family. Homodimer. It depends on [4Fe-4S] cluster as a cofactor. [2Fe-2S] cluster serves as cofactor.

It carries out the reaction (4R,5S)-dethiobiotin + (sulfur carrier)-SH + 2 reduced [2Fe-2S]-[ferredoxin] + 2 S-adenosyl-L-methionine = (sulfur carrier)-H + biotin + 2 5'-deoxyadenosine + 2 L-methionine + 2 oxidized [2Fe-2S]-[ferredoxin]. It participates in cofactor biosynthesis; biotin biosynthesis; biotin from 7,8-diaminononanoate: step 2/2. Functionally, catalyzes the conversion of dethiobiotin (DTB) to biotin by the insertion of a sulfur atom into dethiobiotin via a radical-based mechanism. The sequence is that of Biotin synthase from Stenotrophomonas maltophilia (strain R551-3).